A 435-amino-acid polypeptide reads, in one-letter code: Mitochondrial association factor 1 form a1 (435 aa).

The signal sequence occupies residues Met1 to Gly20. Over Ala21 to Arg96 the chain is Vacuolar. Residues Ile97–Arg117 traverse the membrane as a helical segment. Over Arg118 to Asp435 the chain is Cytoplasmic. The interval Arg120–Thr159 is disordered.

In terms of assembly, interacts with host SAMM50.

It is found in the parasitophorous vacuole membrane. In terms of biological role, during host cell infection by tachyzoites, does not play a role in tethering the parasitophorous vacuole to the host mitochondria, probably because it does not bind host mitochondrial import protein TOMM70. The protein is Mitochondrial association factor 1 form a1 of Toxoplasma gondii (strain ATCC 50611 / Me49).